The following is a 1456-amino-acid chain: Leucine-rich repeat-containing protein 9 (1456 aa).

LRR repeat units lie at residues 53–78 (FHNLSSLTIVAQDIREISGLETCLQL), 97–119 (CRNLEKLYLYYNKISKIENLEKL), 120–141 (IKLEVLWLNHNMIKNIEGLQTL), 142–164 (KNLKDLNLAGNLVSSIGRCLDPN), 166–188 (QLEKLNLSGNQITSFKDLTNLTK), 190–212 (TRLKDLCLNDPQYKSNPVCQLCN), 224–248 (LQRLDTFDVSAKQIKELADSTAMKK), and 264–287 (NEELEKLNDRKCKLQKLPEERIKL). Residues 305 to 325 (SSKGQSDTTPEAEKPRNSEVV) form a disordered region. The stretch at 339-362 (LSALDDRVTFWNKKLHEIEAIYRT) is one LRR 9 repeat. Tyr525 bears the Phosphotyrosine mark. 23 LRR repeats span residues 661 to 683 (KPRPKLISLDEKTIISLAKTNIY), 684 to 705 (SHIVNLNLHGNSLSKLRDLAKL), 706 to 727 (TGLRKLNISFNEFTCLDDVYHL), 729 to 748 (NLEYLDASHNHVITLEGFRG), 749 to 772 (LMKLKHLDLSWNQLKKTGEEINVL), 776 to 802 (TTSLLTLDIQHNPWQKPATLRLSVIGR), 806 to 833 (LTHLDGLVISEEETRAALKFISGTKITQ), 876 to 898 (YSKITALNLDGQHLFEITNLEKL), 899 to 920 (ENLKWASFSNNNLSKMEGLESC), 921 to 942 (VNLEELTLDGNCISKIEGITRL), 943 to 965 (TKLSRLSMNNNLLTGLEKHTFDN), 967 to 991 (LHLHSLSLENNRITSLSALQKTFTL), 993 to 1010 (ELYISNNYIAVNQEIYNL), 1013 to 1037 (LCNLVILDMYGNIIIWNQENYRFFV), 1082 to 1105 (FIQMQELNWTSSAIRTVDLIPVDH), 1106 to 1128 (FRNVSNVNLQNNNLTSFSGLIYL), 1129 to 1151 (PNVKVLCLNYNHIESIMPRLKPQ), 1191 to 1214 (MQSLEVLHLGYNGICNLVQLQLNR), 1215 to 1237 (LRNLKFLFLQGNEISQVEGLDNL), 1238 to 1260 (IVLQELVVDHNRIRAFNDTAFSK), 1262 to 1283 (SSLLMLHLEENRLRELSKLQSL), 1284 to 1307 (VKLEKLFLGYNKIQDITELEKLDV), and 1309 to 1335 (PSLRELTVYGNPICRKMVHRHVLIFRL).

The polypeptide is Leucine-rich repeat-containing protein 9 (Lrrc9) (Mus musculus (Mouse)).